Consider the following 95-residue polypeptide: Small ribosomal subunit protein bS6 (95 aa).

This sequence belongs to the bacterial ribosomal protein bS6 family.

In terms of biological role, binds together with bS18 to 16S ribosomal RNA. The protein is Small ribosomal subunit protein bS6 of Corynebacterium glutamicum (strain ATCC 13032 / DSM 20300 / JCM 1318 / BCRC 11384 / CCUG 27702 / LMG 3730 / NBRC 12168 / NCIMB 10025 / NRRL B-2784 / 534).